The sequence spans 423 residues: Histone deacetylase 14, chloroplastic (423 aa).

The N-terminal 44 residues, 1 to 44, are a transit peptide targeting the chloroplast; sequence MSMALIVRPFFVPGSAGISGSRNICKKNQWRKYLLKPSGSSINC. Residues 62–392 are histone deacetylase; the sequence is DARLIYSVSA…FRALLGEDSL (331 aa). The Proton donor/acceptor role is filled by His202. 3 residues coordinate Zn(2+): Asp239, His241, and Asp326.

It belongs to the histone deacetylase family. As to quaternary structure, interacts with PP2A2. Requires Zn(2+) as cofactor. Expressed in stems, leaves, flowers, siliques and mature seeds.

Its subcellular location is the nucleus. It localises to the cytoplasm. The protein localises to the plastid. The protein resides in the chloroplast stroma. It is found in the mitochondrion. It catalyses the reaction N-acetylserotonin + H2O = serotonin + acetate. It carries out the reaction N-acetyltyramine + H2O = tyramine + acetate. The catalysed reaction is N-acetyltryptamine + H2O = tryptamine + acetate. The enzyme catalyses melatonin + H2O = 5-methoxytryptamine + acetate. Its activity is regulated as follows. Its activity is inhibited by trichostatin A (TSA), a known histone deacetylase inhibitor. Its function is as follows. Regulates lysine acetylation levels of plastid proteins related to photosynthesis. Involved in the regulation of the activation state of RuBisCO, which is controlled by lysine acetylation of RuBisCO activase under low-light conditions. Associates with alpha- and beta-tubulins and deacetylate alpha-tubulin. Does not seem to be required for the cellular patterning in the root epidermis. Involved in the regulation of melatonin biosynthesis by catalyzing the deacetylation of N-acetylserotonin to produce serotonin. N-acetylserotonin is methylated by acetylserotonin O-methyltransferase (ASMT) to produce melatonin (N-acetyl-5-methoxytryptamine). Deacetylates melatonin to produce 5-methoxytryptamine. In vitro, deacetylates N-acetyltyramine and N-acetyltryptamine to produce tyramine and tryptamine, respectively. The polypeptide is Histone deacetylase 14, chloroplastic (Arabidopsis thaliana (Mouse-ear cress)).